Here is a 383-residue protein sequence, read N- to C-terminus: MGVKASQTGFVVLVLLQCCSAYKLVCYYTSWSQYREGDGSCFPDALDRFLCTHIIYSFANISNDHIDTWEWNDVTLYGMLNTLKNRNPNLKTLLSVGGWNFGSQRFSKIASNTQSRRTFIKSVPPFLRTHGFDGLDLAWLYPGRRDKQHFTTLIKEMKAEFIKEAQPGKKQLLLSAALSAGKVTIDSSYDIAKISQHLDFISIMTYDFHGAWRGTTGHHSPLFRGQEDASPDRFSNTDYAVGYMLRLGAPASKLVMGIPTFGRSFTLASSETGVGAPISGPGIPGRFTKEAGTLAYYEICDFLRGATVHRILGQQVPYATKGNQWVGYDDQESVKSKVQYLKDRQLAGAMVWALDLDDFQGSFCGQDLRFPLTNAIKDALAAT.

The signal sequence occupies residues 1 to 21 (MGVKASQTGFVVLVLLQCCSA). Residues 22-383 (YKLVCYYTSW…NAIKDALAAT (362 aa)) form the GH18 domain. The cysteines at positions 26 and 51 are disulfide-linked. N60 carries N-linked (GlcNAc...) asparagine glycosylation. Chitin-binding positions include 70–71 (EW), 97–100 (GGWN), Y141, 204–207 (MTYD), and R263. C300 and C364 are joined by a disulfide. The tract at residues 324-338 (QWVGYDDQESVKSKV) is important for AKT1 activation and IL8 production. W352 is a binding site for chitin.

It belongs to the glycosyl hydrolase 18 family. Monomer. In terms of processing, glycosylated. In terms of tissue distribution, present in activated macrophages, articular chondrocytes, synovial cells as well as in liver. Very low or undetectable expression in non-inflammatory colon. Undetectable in muscle tissues, lung, pancreas, mononuclear cells, or fibroblasts.

It is found in the secreted. The protein localises to the extracellular space. Its subcellular location is the cytoplasm. The protein resides in the perinuclear region. It localises to the endoplasmic reticulum. In terms of biological role, carbohydrate-binding lectin with a preference for chitin. Has no chitinase activity. May play a role in tissue remodeling and in the capacity of cells to respond to and cope with changes in their environment. Plays a role in T-helper cell type 2 (Th2) inflammatory response and IL-13-induced inflammation, regulating allergen sensitization, inflammatory cell apoptosis, dendritic cell accumulation and M2 macrophage differentiation. Facilitates invasion of pathogenic enteric bacteria into colonic mucosa and lymphoid organs. Mediates activation of AKT1 signaling pathway and subsequent IL8 production in colonic epithelial cells. Regulates antibacterial responses in lung by contributing to macrophage bacterial killing, controlling bacterial dissemination and augmenting host tolerance. Also regulates hyperoxia-induced injury, inflammation and epithelial apoptosis in lung. The chain is Chitinase-3-like protein 1 (CHI3L1) from Homo sapiens (Human).